A 433-amino-acid polypeptide reads, in one-letter code: WD repeat domain phosphoinositide-interacting protein 1 (433 aa).

Residues 127 to 132 (LLKTLL) carry the Nuclear receptor interaction motif. WD repeat units follow at residues 136–177 (RNPH…CECT) and 180–220 (AHDS…KLYE). Positions 221–224 (FRRG) match the L/FRRG motif motif. 2 WD repeats span residues 226 to 265 (KRYV…ERSE) and 296 to 346 (DRAF…GGEC).

The protein belongs to the WD repeat PROPPIN family.

The protein resides in the golgi apparatus. The protein localises to the trans-Golgi network. Its subcellular location is the endosome. It is found in the cytoplasmic vesicle. It localises to the clathrin-coated vesicle. The protein resides in the preautophagosomal structure membrane. The protein localises to the cytoplasm. Its subcellular location is the cytoskeleton. In terms of biological role, component of the autophagy machinery that controls the major intracellular degradation process by which cytoplasmic materials are packaged into autophagosomes and delivered to lysosomes for degradation. Plays an important role in starvation- and calcium-mediated autophagy, as well as in mitophagy. Functions downstream of the ulk1 and PI3-kinases that produce phosphatidylinositol 3-phosphate (PtdIns3P) on membranes of the endoplasmic reticulum once activated. Binds phosphatidylinositol 3-phosphate (PtdIns3P), and maybe other phosphoinositides including PtdIns3,5P2 and PtdIns5P, and is recruited to phagophore assembly sites at the endoplasmic reticulum membranes. There, it assists wipi2 in the recruitment of atg12-atg5-atg16l1, a complex that directly controls the elongation of the nascent autophagosomal membrane. Together with wdr45/wipi4, promotes atg2 (atg2a or atg2b)-mediated lipid transfer by enhancing atg2-association with phosphatidylinositol 3-monophosphate (PI3P)-containing membranes. The sequence is that of WD repeat domain phosphoinositide-interacting protein 1 (wipi1) from Xenopus laevis (African clawed frog).